The following is a 235-amino-acid chain: Aspartate/glutamate leucyltransferase (235 aa).

It belongs to the R-transferase family. Bpt subfamily.

The protein resides in the cytoplasm. The catalysed reaction is N-terminal L-glutamyl-[protein] + L-leucyl-tRNA(Leu) = N-terminal L-leucyl-L-glutamyl-[protein] + tRNA(Leu) + H(+). It carries out the reaction N-terminal L-aspartyl-[protein] + L-leucyl-tRNA(Leu) = N-terminal L-leucyl-L-aspartyl-[protein] + tRNA(Leu) + H(+). Its function is as follows. Functions in the N-end rule pathway of protein degradation where it conjugates Leu from its aminoacyl-tRNA to the N-termini of proteins containing an N-terminal aspartate or glutamate. This is Aspartate/glutamate leucyltransferase from Pseudomonas putida (strain ATCC 47054 / DSM 6125 / CFBP 8728 / NCIMB 11950 / KT2440).